The chain runs to 133 residues: Large ribosomal subunit protein bL20 (133 aa).

It belongs to the bacterial ribosomal protein bL20 family.

Functionally, binds directly to 23S ribosomal RNA and is necessary for the in vitro assembly process of the 50S ribosomal subunit. It is not involved in the protein synthesizing functions of that subunit. The protein is Large ribosomal subunit protein bL20 of Bartonella quintana (strain Toulouse) (Rochalimaea quintana).